The sequence spans 816 residues: Auxin response factor 12 (816 aa).

Low complexity predominate over residues 1–10 (MSSSSAASIG). The tract at residues 1-24 (MSSSSAASIGPPQPPPPPAPPEEE) is disordered. Pro residues predominate over residues 11–20 (PPQPPPPPAP). The segment at residues 135 to 237 (FCKTLTASDT…QLLLGIRRAS (103 aa)) is a DNA-binding region (TF-B3). Positions 526–565 (NDQKQKIQPDQSYQVPTSAVLPSPTSLPSHLREKFGFSDP) are disordered. The region spanning 717–801 (RTFVKVYKSG…WYIKILSPED (85 aa)) is the PB1 domain.

The protein belongs to the ARF family. In terms of assembly, homodimers and heterodimers.

The protein resides in the nucleus. In terms of biological role, auxin response factors (ARFs) are transcriptional factors that bind specifically to the DNA sequence 5'-TGTCTC-3' found in the auxin-responsive promoter elements (AuxREs). The chain is Auxin response factor 12 (ARF12) from Oryza sativa subsp. indica (Rice).